Reading from the N-terminus, the 462-residue chain is UDP-N-acetylmuramoylalanine--D-glutamate ligase (462 aa).

118-124 serves as a coordination point for ATP; that stretch reads GTNGKST.

Belongs to the MurCDEF family.

Its subcellular location is the cytoplasm. It catalyses the reaction UDP-N-acetyl-alpha-D-muramoyl-L-alanine + D-glutamate + ATP = UDP-N-acetyl-alpha-D-muramoyl-L-alanyl-D-glutamate + ADP + phosphate + H(+). It participates in cell wall biogenesis; peptidoglycan biosynthesis. Cell wall formation. Catalyzes the addition of glutamate to the nucleotide precursor UDP-N-acetylmuramoyl-L-alanine (UMA). This chain is UDP-N-acetylmuramoylalanine--D-glutamate ligase, found in Anaeromyxobacter dehalogenans (strain 2CP-C).